The chain runs to 596 residues: Elongation factor 4 (596 aa).

The tr-type G domain occupies 2 to 184 (KHIRNFSIIA…TIVAQIPPPE (183 aa)). Residues 14–19 (DHGKST) and 131–134 (NKID) each bind GTP.

It belongs to the TRAFAC class translation factor GTPase superfamily. Classic translation factor GTPase family. LepA subfamily.

The protein resides in the cell inner membrane. The catalysed reaction is GTP + H2O = GDP + phosphate + H(+). Required for accurate and efficient protein synthesis under certain stress conditions. May act as a fidelity factor of the translation reaction, by catalyzing a one-codon backward translocation of tRNAs on improperly translocated ribosomes. Back-translocation proceeds from a post-translocation (POST) complex to a pre-translocation (PRE) complex, thus giving elongation factor G a second chance to translocate the tRNAs correctly. Binds to ribosomes in a GTP-dependent manner. This is Elongation factor 4 from Shewanella loihica (strain ATCC BAA-1088 / PV-4).